The chain runs to 306 residues: tRNA dimethylallyltransferase (306 aa).

12–19 (GPTASGKT) serves as a coordination point for ATP. Position 14-19 (14-19 (TASGKT)) interacts with substrate. Interaction with substrate tRNA stretches follow at residues 37–40 (DSAL), 161–165 (QRLSR), and 242–247 (RCVGYR).

Belongs to the IPP transferase family. In terms of assembly, monomer. Mg(2+) is required as a cofactor.

It carries out the reaction adenosine(37) in tRNA + dimethylallyl diphosphate = N(6)-dimethylallyladenosine(37) in tRNA + diphosphate. Functionally, catalyzes the transfer of a dimethylallyl group onto the adenine at position 37 in tRNAs that read codons beginning with uridine, leading to the formation of N6-(dimethylallyl)adenosine (i(6)A). The sequence is that of tRNA dimethylallyltransferase from Shewanella amazonensis (strain ATCC BAA-1098 / SB2B).